The primary structure comprises 351 residues: MIKLNHINKTYPNGFVALKNIDLEVAKGDIMGIIGYSGAGKSTLIRIINRLEEPTSGTLFVDGVNMLGLKQKELQMQRQKIGMIFQHFNLLSARNVFDNVAFALEIAKWDKKAIKPRVDELLELVGLSERASFFPSQLSGGQKQRVAIARALANHPKVLLCDEATSALDTKTTKSILALLRDIQRRLGLSVVLITHQIEVVREICNKMCVVSDGAIVERGSVAEVFAAPKHPITRELISFLPQDEGHIISHLKDLHNVYKVIFTGPYAHLPLVSQMIREFDVDVNILSGNIDELATGEVGHLVLKFIATDDKRDKALSWLKEQGVSIEDLNLMCQNTDSIQLSQKIESKAV.

The ABC transporter domain occupies 2-238 (IKLNHINKTY…PKHPITRELI (237 aa)). ATP is bound at residue 35–42 (GYSGAGKS).

The protein belongs to the ABC transporter superfamily. Methionine importer (TC 3.A.1.24) family. The complex is composed of two ATP-binding proteins (MetN), two transmembrane proteins (MetI) and a solute-binding protein (MetQ).

It localises to the cell inner membrane. It catalyses the reaction L-methionine(out) + ATP + H2O = L-methionine(in) + ADP + phosphate + H(+). It carries out the reaction D-methionine(out) + ATP + H2O = D-methionine(in) + ADP + phosphate + H(+). Part of the ABC transporter complex MetNIQ involved in methionine import. Responsible for energy coupling to the transport system. This Helicobacter hepaticus (strain ATCC 51449 / 3B1) protein is Methionine import ATP-binding protein MetN.